Here is a 291-residue protein sequence, read N- to C-terminus: ATP synthase gamma chain (291 aa).

The protein belongs to the ATPase gamma chain family. F-type ATPases have 2 components, CF(1) - the catalytic core - and CF(0) - the membrane proton channel. CF(1) has five subunits: alpha(3), beta(3), gamma(1), delta(1), epsilon(1). CF(0) has three main subunits: a, b and c.

Its subcellular location is the cell inner membrane. In terms of biological role, produces ATP from ADP in the presence of a proton gradient across the membrane. The gamma chain is believed to be important in regulating ATPase activity and the flow of protons through the CF(0) complex. This Methylibium petroleiphilum (strain ATCC BAA-1232 / LMG 22953 / PM1) protein is ATP synthase gamma chain.